We begin with the raw amino-acid sequence, 297 residues long: Release factor glutamine methyltransferase (297 aa).

S-adenosyl-L-methionine contacts are provided by residues 134 to 138 (GTGSG), Asp157, and Asn200. 200–203 (NPPY) serves as a coordination point for substrate.

It belongs to the protein N5-glutamine methyltransferase family. PrmC subfamily.

The enzyme catalyses L-glutaminyl-[peptide chain release factor] + S-adenosyl-L-methionine = N(5)-methyl-L-glutaminyl-[peptide chain release factor] + S-adenosyl-L-homocysteine + H(+). Its function is as follows. Methylates the class 1 translation termination release factors RF1/PrfA and RF2/PrfB on the glutamine residue of the universally conserved GGQ motif. The protein is Release factor glutamine methyltransferase of Bradyrhizobium diazoefficiens (strain JCM 10833 / BCRC 13528 / IAM 13628 / NBRC 14792 / USDA 110).